The chain runs to 131 residues: Leptin receptor gene-related protein (131 aa).

Helical transmembrane passes span 7–27 (LVALSFSGAIGLTFLMLGCAL), 32–52 (VYWPLFVLIFYVISPIPYFIA), 69–89 (LAYFFTTGIVVSAFGLPVVLA), and 100–120 (GLVLAGNAVIFLTIQGFFLVF).

This sequence belongs to the OB-RGRP/VPS55 family. Interacts with LEPR. Interacts with RAB13. In terms of tissue distribution, widely distributed in the brain, with elevated expression in the hypothalamic regions, including the paraventricular nucleus. In the placenta, present at high levels in the junctional zone situated towards the maternal aspect and throughout the labyrinth zone in close proximity to the developing fetus.

It localises to the golgi apparatus membrane. The protein resides in the endosome membrane. In terms of biological role, negatively regulates leptin receptor (LEPR) cell surface expression, and thus decreases response to leptin. Negatively regulates growth hormone (GH) receptor cell surface expression in liver. May play a role in liver resistance to GH during periods of reduced nutrient availability. This chain is Leptin receptor gene-related protein (Leprot), found in Mus musculus (Mouse).